Reading from the N-terminus, the 145-residue chain is 3-dehydroquinate dehydratase (145 aa).

The active-site Proton acceptor is the Tyr-23. Residues Asn-75, His-81, and Asp-88 each coordinate substrate. The Proton donor role is filled by His-101. Residues 102 to 103 (IS) and Arg-112 each bind substrate.

It belongs to the type-II 3-dehydroquinase family. In terms of assembly, homododecamer.

It catalyses the reaction 3-dehydroquinate = 3-dehydroshikimate + H2O. The protein operates within metabolic intermediate biosynthesis; chorismate biosynthesis; chorismate from D-erythrose 4-phosphate and phosphoenolpyruvate: step 3/7. Its function is as follows. Catalyzes a trans-dehydration via an enolate intermediate. The protein is 3-dehydroquinate dehydratase of Caldicellulosiruptor bescii (strain ATCC BAA-1888 / DSM 6725 / KCTC 15123 / Z-1320) (Anaerocellum thermophilum).